Here is a 282-residue protein sequence, read N- to C-terminus: Aspergillopepsin-2 (282 aa).

An N-terminal signal peptide occupies residues 1–18; sequence MKFSTILTGSLFATAALA. 2 propeptides span residues 19–59 and 99–109; these read APLT…GTTN and GGGYGYWKNKR. Basic residues predominate over residues 27-39; that stretch reads ARKEARAAGKRHS. Residues 27 to 46 are disordered; the sequence is ARKEARAAGKRHSNPPYIPG. The residue at position 110 (Q110) is a Pyrrolidone carboxylic acid. Cystine bridges form between C115–C139 and C127–C210.

The protein belongs to the peptidase G1 family. In terms of assembly, heterodimer of two noncovalently bound light and heavy chains.

It carries out the reaction Preferential cleavage in B chain of insulin: 3-Asn-|-Gln-4, 13-Gly-|-Ala-14, and 26-Tyr-|-Thr-27.. The protein is Aspergillopepsin-2 of Aspergillus niger.